The primary structure comprises 205 residues: Putative protein phosphatase inhibitor 2-like protein 1 (205 aa).

Disordered regions lie at residues 1-44, 64-92, 107-148, and 171-205; these read MAAS…SKKS, GLMK…TETT, AEGL…TLHY, and VEEM…SRSS. Required for binding PPP1CC stretches follow at residues 12–17 and 43–55; these read KGILKD and KSQK…ILAT. The span at 17–26 shows a compositional bias: polar residues; the sequence is DNTSTTSSMV. Residues 30 to 44 show a composition bias toward basic and acidic residues; sequence EHPRGSVHEQLSKKS. Threonine 73 carries the phosphothreonine; by GSK3 modification. Acidic residues-rich tracts occupy residues 80–91 and 121–130; these read GDDEDACSDTET and SSGEEDSDLS. Phosphoserine; by CK2 is present on serine 87. Over residues 131-144 the composition is skewed to basic and acidic residues; it reads PEEREKKRQFEMRR. The segment at 147-150 is required for binding PPP1CC catalytic center, displacing metal ions and inhibition of PPP1CC catalytic activity; it reads HYNE. The segment covering 182–205 has biased composition (polar residues); sequence SMNTEESNQGSTASDQQQNKSRSS.

This sequence belongs to the protein phosphatase inhibitor 2 family.

Its function is as follows. Inhibitor of protein-phosphatase 1. This is Putative protein phosphatase inhibitor 2-like protein 1 (PPP1R2P1) from Homo sapiens (Human).